Consider the following 206-residue polypeptide: ATP phosphoribosyltransferase (206 aa).

It belongs to the ATP phosphoribosyltransferase family. Short subfamily. As to quaternary structure, heteromultimer composed of HisG and HisZ subunits.

It localises to the cytoplasm. It carries out the reaction 1-(5-phospho-beta-D-ribosyl)-ATP + diphosphate = 5-phospho-alpha-D-ribose 1-diphosphate + ATP. It functions in the pathway amino-acid biosynthesis; L-histidine biosynthesis; L-histidine from 5-phospho-alpha-D-ribose 1-diphosphate: step 1/9. Catalyzes the condensation of ATP and 5-phosphoribose 1-diphosphate to form N'-(5'-phosphoribosyl)-ATP (PR-ATP). Has a crucial role in the pathway because the rate of histidine biosynthesis seems to be controlled primarily by regulation of HisG enzymatic activity. The protein is ATP phosphoribosyltransferase of Wolinella succinogenes (strain ATCC 29543 / DSM 1740 / CCUG 13145 / JCM 31913 / LMG 7466 / NCTC 11488 / FDC 602W) (Vibrio succinogenes).